Consider the following 440-residue polypeptide: Adenosylhomocysteinase (440 aa).

Substrate-binding residues include threonine 47, aspartate 123, and glutamate 148. 149-151 (TTT) provides a ligand contact to NAD(+). Residues lysine 178 and aspartate 182 each contribute to the substrate site. Residues asparagine 183, 228-233 (GFGDVG), glutamate 251, 307-309 (IGH), and asparagine 354 each bind NAD(+).

The protein belongs to the adenosylhomocysteinase family. NAD(+) is required as a cofactor.

The catalysed reaction is S-adenosyl-L-homocysteine + H2O = L-homocysteine + adenosine. The protein operates within amino-acid biosynthesis; L-homocysteine biosynthesis; L-homocysteine from S-adenosyl-L-homocysteine: step 1/1. Functionally, adenosylhomocysteine is a competitive inhibitor of S-adenosyl-L-methionine-dependent methyl transferase reactions; therefore adenosylhomocysteinase may play a key role in the control of methylations via regulation of the intracellular concentration of adenosylhomocysteine. This Pneumocystis carinii protein is Adenosylhomocysteinase (SAHH).